The following is a 471-amino-acid chain: MKMPKTIGLVHFIGIGGIGMSGIAEVLHNLGHRVQGSDQADSANVQRLREKGISISIGHKAENLGDAEVVVVSTAIKKDNPELIAAREKFLPVVRRAEMLAELMRFRNAIAIGGTHGKTTTTSMVAALLDAGGLDPTVINGGIINAYGTNARMGAGEWMVVEADESDGTFLKLPADIAVVTNIDPEHLDHYGSFDAVRAAFRQFVENVPFYGFGVLCLDHPEVQSMVGKIEDRKVVTYGENPQADVRFHNIRMDGATSIFDIEIRRRRTGQVIEIKDLRLPMPGRHNVSNATAAVAVAQRLGIKPEDIARGLATFGGVKRRFTLTGEWNGARIFDDYGHHPVEIRAVLRAAREACQGRIVAVHQPHRYSRLSSLFEDFTSCFNDADTILLAPVYAAGEEAIEGVSSEALVDRIKAAGHRDARHVPGQEALAPVIAKIAQPGDFVVLLGAGSITYWAAALPKQLAEISGNRA.

ATP is bound at residue 114-120 (GTHGKTT).

The protein belongs to the MurCDEF family.

The protein resides in the cytoplasm. The enzyme catalyses UDP-N-acetyl-alpha-D-muramate + L-alanine + ATP = UDP-N-acetyl-alpha-D-muramoyl-L-alanine + ADP + phosphate + H(+). It participates in cell wall biogenesis; peptidoglycan biosynthesis. Its function is as follows. Cell wall formation. The sequence is that of UDP-N-acetylmuramate--L-alanine ligase from Rhizobium meliloti (strain 1021) (Ensifer meliloti).